Consider the following 276-residue polypeptide: Putative hydro-lyase Xaut_1503 (276 aa).

Belongs to the D-glutamate cyclase family.

The sequence is that of Putative hydro-lyase Xaut_1503 from Xanthobacter autotrophicus (strain ATCC BAA-1158 / Py2).